The following is a 332-amino-acid chain: Ferredoxin--NADP reductase (332 aa).

FAD-binding residues include T20, E39, Q47, Y52, V92, F126, D288, and T329.

This sequence belongs to the ferredoxin--NADP reductase type 2 family. As to quaternary structure, homodimer. It depends on FAD as a cofactor.

The enzyme catalyses 2 reduced [2Fe-2S]-[ferredoxin] + NADP(+) + H(+) = 2 oxidized [2Fe-2S]-[ferredoxin] + NADPH. The chain is Ferredoxin--NADP reductase from Geobacillus kaustophilus (strain HTA426).